Here is a 239-residue protein sequence, read N- to C-terminus: UDP-2,3-diacylglucosamine hydrolase (239 aa).

5 residues coordinate Mn(2+): aspartate 9, histidine 11, aspartate 42, asparagine 80, and histidine 115. 80–81 (NR) contributes to the substrate binding site. Substrate-binding residues include aspartate 123, serine 161, lysine 165, lysine 168, and histidine 196. 2 residues coordinate Mn(2+): histidine 196 and histidine 198.

The protein belongs to the LpxH family. Mn(2+) is required as a cofactor.

Its subcellular location is the cell inner membrane. The enzyme catalyses UDP-2-N,3-O-bis[(3R)-3-hydroxytetradecanoyl]-alpha-D-glucosamine + H2O = 2-N,3-O-bis[(3R)-3-hydroxytetradecanoyl]-alpha-D-glucosaminyl 1-phosphate + UMP + 2 H(+). The protein operates within glycolipid biosynthesis; lipid IV(A) biosynthesis; lipid IV(A) from (3R)-3-hydroxytetradecanoyl-[acyl-carrier-protein] and UDP-N-acetyl-alpha-D-glucosamine: step 4/6. Its function is as follows. Hydrolyzes the pyrophosphate bond of UDP-2,3-diacylglucosamine to yield 2,3-diacylglucosamine 1-phosphate (lipid X) and UMP by catalyzing the attack of water at the alpha-P atom. Involved in the biosynthesis of lipid A, a phosphorylated glycolipid that anchors the lipopolysaccharide to the outer membrane of the cell. The protein is UDP-2,3-diacylglucosamine hydrolase of Pasteurella multocida (strain Pm70).